Here is a 267-residue protein sequence, read N- to C-terminus: 2-keto-3-deoxy-L-rhamnonate aldolase (267 aa).

Residue histidine 49 is the Proton acceptor of the active site. Glutamine 151 provides a ligand contact to substrate. Glutamate 153 contributes to the Mg(2+) binding site. Residues alanine 178 and aspartate 179 each coordinate substrate. Aspartate 179 lines the Mg(2+) pocket.

Belongs to the HpcH/HpaI aldolase family. KDR aldolase subfamily. In terms of assembly, homohexamer. Mg(2+) serves as cofactor.

The enzyme catalyses 2-dehydro-3-deoxy-L-rhamnonate = (S)-lactaldehyde + pyruvate. In terms of biological role, catalyzes the reversible retro-aldol cleavage of 2-keto-3-deoxy-L-rhamnonate (KDR) to pyruvate and lactaldehyde. The protein is 2-keto-3-deoxy-L-rhamnonate aldolase of Escherichia coli O157:H7.